The sequence spans 108 residues: UPF0145 protein Tery_3795 (108 aa).

The protein belongs to the UPF0145 family.

In Trichodesmium erythraeum (strain IMS101), this protein is UPF0145 protein Tery_3795.